Here is a 658-residue protein sequence, read N- to C-terminus: Gametogenetin (658 aa).

Disordered regions lie at residues 1-268 (MGNV…ASGG) and 285-584 (KQGP…SNKG). Positions 14–30 (SRKEQASDRASDSRRTP) are enriched in basic and acidic residues. Low complexity predominate over residues 54 to 83 (PGSSGPPGLLIPPESQASSSTLPLTLELPS). An interaction with GGNBP1 region spans residues 127–491 (RGLLEASHRG…APTPPSTLSP (365 aa)). Residues 163–188 (PAPPPTPLEPRKQLPPAPSTCDPQPP) are compositionally biased toward pro residues. Residues 194–204 (LASSATSPTES) show a composition bias toward polar residues. Positions 252-264 (SSSGPLAAKASLG) are enriched in low complexity. Serine 384 carries the post-translational modification Phosphoserine. Positions 398 to 409 (PRRPTPALLAPP) are enriched in low complexity. Pro residues predominate over residues 423–460 (RPVPPSPQQIPPLPPPPPTPPATPPPAPPPTPQPPALP). Over residues 489-516 (LSPTAAAEQAPAPTPAPVTSQVPATTTA) the composition is skewed to low complexity. The interval 496 to 658 (EQAPAPTPAP…HYDLQATHST (163 aa)) is interactions with ZNF403/GGNBP2 and OAZ3. Residues 527 to 536 (IRTRRNKGPR) show a composition bias toward basic residues.

Interacts with FANCL, GGNBP1 and ZNF403/GGNBP2.

Its function is as follows. May be involved in spermatogenesis. The chain is Gametogenetin (Ggn) from Rattus norvegicus (Rat).